Reading from the N-terminus, the 489-residue chain is Zinc finger protein 58 (489 aa).

A KRAB domain is found at 2-73; it reads LSFWDVAIDF…KRQAAAAVHP (72 aa). The C2H2-type 1; degenerate zinc finger occupies 78-100; the sequence is NKCKDFSKAFFCKSLLTQHQRIR. C2H2-type zinc fingers lie at residues 106-128, 134-156, 162-184, 190-212, 218-240, 246-268, 274-296, 302-324, 330-352, 358-380, 386-408, 410-432, 438-460, and 466-488; these read FKCEECGKAFNNRSNLSEHKRIH, YKCEECGKAFRIRSKLSTHQRVH, YKCEECGKAFNSHSNLSEHKRIH, YKCEECGKAFSTRSTYYRHQKNH, YKCEECAKEFSYPSLLKVHQRIH, YKCEECGKPFYCPLLLKKHQIIH, YKCAECGKAFHYPSLLKRHQRIH, CKCKDCDRAFYSSAFLKRHQRIH, YKCGECGKRFCSFPHLQYHQRFH, YKCEQCGKTFSTLSYLPWHKLRH, YKCEKCGKMFYSTLDLKKHQKIH, YKCGECHYGFPNYAALTAHQRVH, HVCEQCGKDFSRIDSLNQHQLVH, and YKCEKCGKCFYRSSSLKRHQGIH.

It belongs to the krueppel C2H2-type zinc-finger protein family. Expressed in liver, testis and, at considerably lower levels, in brain, spleen and heart.

The protein resides in the nucleus. May have a role during differentiation processes. The polypeptide is Zinc finger protein 58 (Zfp58) (Mus musculus (Mouse)).